A 429-amino-acid chain; its full sequence is UPF0597 protein BT_2080 (429 aa).

The protein belongs to the UPF0597 family.

The sequence is that of UPF0597 protein BT_2080 from Bacteroides thetaiotaomicron (strain ATCC 29148 / DSM 2079 / JCM 5827 / CCUG 10774 / NCTC 10582 / VPI-5482 / E50).